A 349-amino-acid chain; its full sequence is Flap endonuclease 1 (349 aa).

The segment at 1-98 (MDLGEIVEDV…EEIERRKRAK (98 aa)) is N-domain. Residues D27, D80, E152, E154, D173, D175, and D236 each contribute to the Mg(2+) site. Residues 116–258 (EIRKYAQAAV…TALRIIKKYN (143 aa)) form an I-domain region. The interaction with PCNA stretch occupies residues 341–349 (KQTGLDQWF).

Belongs to the XPG/RAD2 endonuclease family. FEN1 subfamily. In terms of assembly, interacts with PCNA. PCNA stimulates the nuclease activity without altering cleavage specificity. The cofactor is Mg(2+).

Structure-specific nuclease with 5'-flap endonuclease and 5'-3' exonuclease activities involved in DNA replication and repair. During DNA replication, cleaves the 5'-overhanging flap structure that is generated by displacement synthesis when DNA polymerase encounters the 5'-end of a downstream Okazaki fragment. Binds the unpaired 3'-DNA end and kinks the DNA to facilitate 5' cleavage specificity. Cleaves one nucleotide into the double-stranded DNA from the junction in flap DNA, leaving a nick for ligation. Also involved in the base excision repair (BER) pathway. Acts as a genome stabilization factor that prevents flaps from equilibrating into structures that lead to duplications and deletions. Also possesses 5'-3' exonuclease activity on nicked or gapped double-stranded DNA. This chain is Flap endonuclease 1, found in Sulfolobus acidocaldarius (strain ATCC 33909 / DSM 639 / JCM 8929 / NBRC 15157 / NCIMB 11770).